Consider the following 426-residue polypeptide: Enolase (426 aa).

Gln162 contributes to the (2R)-2-phosphoglycerate binding site. Glu204 functions as the Proton donor in the catalytic mechanism. 3 residues coordinate Mg(2+): Asp241, Glu284, and Asp311. (2R)-2-phosphoglycerate contacts are provided by Lys336, Arg365, Ser366, and Lys387. Lys336 (proton acceptor) is an active-site residue.

Belongs to the enolase family. As to quaternary structure, component of the RNA degradosome, a multiprotein complex involved in RNA processing and mRNA degradation. Requires Mg(2+) as cofactor.

Its subcellular location is the cytoplasm. It is found in the secreted. The protein localises to the cell surface. It carries out the reaction (2R)-2-phosphoglycerate = phosphoenolpyruvate + H2O. Its pathway is carbohydrate degradation; glycolysis; pyruvate from D-glyceraldehyde 3-phosphate: step 4/5. In terms of biological role, catalyzes the reversible conversion of 2-phosphoglycerate (2-PG) into phosphoenolpyruvate (PEP). It is essential for the degradation of carbohydrates via glycolysis. The protein is Enolase of Hydrogenovibrio crunogenus (strain DSM 25203 / XCL-2) (Thiomicrospira crunogena).